The primary structure comprises 429 residues: Bifunctional protein GlmU (429 aa).

Positions 1–223 (MKTSILILAA…EDEFMGINDK (223 aa)) are pyrophosphorylase. UDP-N-acetyl-alpha-D-glucosamine-binding positions include 8 to 11 (LAAG), Lys22, and 81 to 82 (GT). Residue Asp102 coordinates Mg(2+). Residues Gly135, Glu149, Asn164, and Asn221 each coordinate UDP-N-acetyl-alpha-D-glucosamine. Position 221 (Asn221) interacts with Mg(2+). Residues 224–244 (FELSIAENFMQKKIKKYWMQQ) form a linker region. Residues 245 to 429 (GVIFHLPQST…KDYYYKKFQK (185 aa)) are N-acetyltransferase. Positions 308 and 325 each coordinate UDP-N-acetyl-alpha-D-glucosamine. His336 (proton acceptor) is an active-site residue. Tyr339 and Asn350 together coordinate UDP-N-acetyl-alpha-D-glucosamine. Acetyl-CoA is bound by residues 359–360 (NY), Ser378, Ala396, and Arg413.

This sequence in the N-terminal section; belongs to the N-acetylglucosamine-1-phosphate uridyltransferase family. The protein in the C-terminal section; belongs to the transferase hexapeptide repeat family. As to quaternary structure, homotrimer. Mg(2+) serves as cofactor.

It localises to the cytoplasm. It catalyses the reaction alpha-D-glucosamine 1-phosphate + acetyl-CoA = N-acetyl-alpha-D-glucosamine 1-phosphate + CoA + H(+). The catalysed reaction is N-acetyl-alpha-D-glucosamine 1-phosphate + UTP + H(+) = UDP-N-acetyl-alpha-D-glucosamine + diphosphate. Its pathway is nucleotide-sugar biosynthesis; UDP-N-acetyl-alpha-D-glucosamine biosynthesis; N-acetyl-alpha-D-glucosamine 1-phosphate from alpha-D-glucosamine 6-phosphate (route II): step 2/2. It functions in the pathway nucleotide-sugar biosynthesis; UDP-N-acetyl-alpha-D-glucosamine biosynthesis; UDP-N-acetyl-alpha-D-glucosamine from N-acetyl-alpha-D-glucosamine 1-phosphate: step 1/1. The protein operates within bacterial outer membrane biogenesis; LPS lipid A biosynthesis. In terms of biological role, catalyzes the last two sequential reactions in the de novo biosynthetic pathway for UDP-N-acetylglucosamine (UDP-GlcNAc). The C-terminal domain catalyzes the transfer of acetyl group from acetyl coenzyme A to glucosamine-1-phosphate (GlcN-1-P) to produce N-acetylglucosamine-1-phosphate (GlcNAc-1-P), which is converted into UDP-GlcNAc by the transfer of uridine 5-monophosphate (from uridine 5-triphosphate), a reaction catalyzed by the N-terminal domain. In Campylobacter jejuni subsp. jejuni serotype O:2 (strain ATCC 700819 / NCTC 11168), this protein is Bifunctional protein GlmU.